The chain runs to 634 residues: Threonine--tRNA ligase (634 aa).

The region spanning methionine 1 to threonine 61 is the TGS domain. Residues aspartate 242–proline 532 are catalytic. Zn(2+)-binding residues include cysteine 333, histidine 384, and histidine 509.

The protein belongs to the class-II aminoacyl-tRNA synthetase family. In terms of assembly, homodimer. The cofactor is Zn(2+).

Its subcellular location is the cytoplasm. It catalyses the reaction tRNA(Thr) + L-threonine + ATP = L-threonyl-tRNA(Thr) + AMP + diphosphate + H(+). Its function is as follows. Catalyzes the attachment of threonine to tRNA(Thr) in a two-step reaction: L-threonine is first activated by ATP to form Thr-AMP and then transferred to the acceptor end of tRNA(Thr). Also edits incorrectly charged L-seryl-tRNA(Thr). This Carboxydothermus hydrogenoformans (strain ATCC BAA-161 / DSM 6008 / Z-2901) protein is Threonine--tRNA ligase.